The sequence spans 80 residues: Acyl carrier protein (80 aa).

Positions 4 to 79 (NSIEEKVRSI…DVVAYIEKVQ (76 aa)) constitute a Carrier domain. Ser39 is subject to O-(pantetheine 4'-phosphoryl)serine.

The protein belongs to the acyl carrier protein (ACP) family. In terms of processing, 4'-phosphopantetheine is transferred from CoA to a specific serine of apo-ACP by AcpS. This modification is essential for activity because fatty acids are bound in thioester linkage to the sulfhydryl of the prosthetic group.

Its subcellular location is the cytoplasm. It participates in lipid metabolism; fatty acid biosynthesis. Carrier of the growing fatty acid chain in fatty acid biosynthesis. This Akkermansia muciniphila (strain ATCC BAA-835 / DSM 22959 / JCM 33894 / BCRC 81048 / CCUG 64013 / CIP 107961 / Muc) protein is Acyl carrier protein.